Consider the following 1262-residue polypeptide: MTQEPQPKFINRKIDKKGLGKLISWAFSHYGTARTALLADNLKNLGFRFATRGAVSISVEDLQVPDSKVNILETAEREIQRAEERFTRGEITEVERFQKVIDTWAGATQELTEGVKENFQERNPLNSVGMMAFSGARGNLSQVRQLVGMRGLMANPQGEIIDLPIKANFREGLNVTEYIISSYGARKGLVDTALRTADSGYLTRRLVDVSQDVIVREEDCTTQRGIFLGSLRDGDKMIVSLEERLVGRVAGRDVVHPVTGEVLAPRNTQFDYDSAARIARSGVDAVMVRSPLTCEANRSVCRMCYGWSLAHSHLVDIGEAVGIIAAQSIGEPGTQLTMRTFHTGGVFTGEVAKPLKAPFDGKIKFSSALKARPMRTRHGDDAYQADQAGTMSLEGSDGKKETVTITPGSLLLVRDGQRIEAGTMYAELALVGKTARKSTEKAQKEVFSDLAGEIKFADLVPEVKTDRQGNETQYASRLGLLWVLSGEVYNLPPGAETSLERGGKVEQGGVIAETRLVTEHGGGVRLKEQDAKGGREVEIITASVMLDKAIVHEEKSQGREHYSLETDNGQVFALKVSPGTKVNNGQVVAERVDDRYMTKSGGLIKYSEGVEVAKARGKQGYEVLKGGTLLWIPEETHEVNKDISLLEVEDGQYVEAGVQVVKDIYCLTSGVVAIAQRNDILREVVIKPGELHLLDAPSDLKVAHESFAYPGTEVIPGVVTTDLRYVEQVETPEGLAVLLRPVEEFPVPDEPDAPSQEASQQAGSSIRLRGMQRIPYRDGDRVKAIDGIELLKTQLVLEITDQAAQLAADIEFVPDEKDPSMVRLQLVILETLLIRRDVAADLLHGSTLTHILVKDGERIGPGAIIARTEILAKQAGTVRGISRVGQTVRRILLVTQSDLVNVPVEGTLTVKPGDLLRAGDKLAKDFASPESGQVVLAESGRVVVRIGRPYLVSGGAILLVVDGDLIQRGDNLALLVFERAKTGDIIQGLPRVEELLEGRKPKEMCVLVERPGKVQITQMPDESYQVSVVEDDGGVTNYPIIGQSLVVVDGQQVQTGESITDGPSNPHDILRIFTAREGLQKGIESVQRYLVNEVQQVYRSQGVEIHDKHIEIIVRQMTSKVRVEDGGDTTFLPGELVELRQIEQVNEAMAVTGGAPADCTPVLLGITKASLNTDSFISAASFQETTRVLTEAAIEGKSDWLRGLKENVIIGRLIPAGTGFNAYEEAEEVIEDDELIDDTLGLRTVGVAFAGDDDFVEEEDED.

Residues C220, C294, C301, and C304 each contribute to the Zn(2+) site.

Belongs to the RNA polymerase beta' chain family. RpoC2 subfamily. In cyanobacteria the RNAP catalytic core is composed of 2 alpha, 1 beta, 1 beta', 1 gamma and 1 omega subunit. When a sigma factor is associated with the core the holoenzyme is formed, which can initiate transcription. The cofactor is Zn(2+).

It catalyses the reaction RNA(n) + a ribonucleoside 5'-triphosphate = RNA(n+1) + diphosphate. DNA-dependent RNA polymerase catalyzes the transcription of DNA into RNA using the four ribonucleoside triphosphates as substrates. The polypeptide is DNA-directed RNA polymerase subunit beta' (Gloeobacter violaceus (strain ATCC 29082 / PCC 7421)).